The primary structure comprises 337 residues: Phosphate acyltransferase (337 aa).

This sequence belongs to the PlsX family. In terms of assembly, homodimer. Probably interacts with PlsY.

It is found in the cytoplasm. It catalyses the reaction a fatty acyl-[ACP] + phosphate = an acyl phosphate + holo-[ACP]. The protein operates within lipid metabolism; phospholipid metabolism. In terms of biological role, catalyzes the reversible formation of acyl-phosphate (acyl-PO(4)) from acyl-[acyl-carrier-protein] (acyl-ACP). This enzyme utilizes acyl-ACP as fatty acyl donor, but not acyl-CoA. The polypeptide is Phosphate acyltransferase (Polynucleobacter necessarius subsp. necessarius (strain STIR1)).